The following is a 322-amino-acid chain: 4-diphosphocytidyl-2-C-methyl-D-erythritol kinase (322 aa).

Lys27 is a catalytic residue. An ATP-binding site is contributed by 112–122 (PVAGGMAGGSA). The active site involves Asp154.

Belongs to the GHMP kinase family. IspE subfamily.

The enzyme catalyses 4-CDP-2-C-methyl-D-erythritol + ATP = 4-CDP-2-C-methyl-D-erythritol 2-phosphate + ADP + H(+). Its pathway is isoprenoid biosynthesis; isopentenyl diphosphate biosynthesis via DXP pathway; isopentenyl diphosphate from 1-deoxy-D-xylulose 5-phosphate: step 3/6. In terms of biological role, catalyzes the phosphorylation of the position 2 hydroxy group of 4-diphosphocytidyl-2C-methyl-D-erythritol. In Mycolicibacterium smegmatis (strain ATCC 700084 / mc(2)155) (Mycobacterium smegmatis), this protein is 4-diphosphocytidyl-2-C-methyl-D-erythritol kinase.